The primary structure comprises 608 residues: Aspartate--tRNA(Asp/Asn) ligase (608 aa).

Glu-187 provides a ligand contact to L-aspartate. The segment at 211–214 (QQFK) is aspartate. Residues Arg-233 and His-461 each coordinate L-aspartate. Position 233–235 (233–235 (RDE)) interacts with ATP. Glu-495 is a binding site for ATP. L-aspartate is bound at residue Arg-502. 547–550 (GLDR) is a binding site for ATP.

It belongs to the class-II aminoacyl-tRNA synthetase family. Type 1 subfamily. Homodimer.

It is found in the cytoplasm. The catalysed reaction is tRNA(Asx) + L-aspartate + ATP = L-aspartyl-tRNA(Asx) + AMP + diphosphate. Functionally, aspartyl-tRNA synthetase with relaxed tRNA specificity since it is able to aspartylate not only its cognate tRNA(Asp) but also tRNA(Asn). Reaction proceeds in two steps: L-aspartate is first activated by ATP to form Asp-AMP and then transferred to the acceptor end of tRNA(Asp/Asn). In Chlorobium phaeobacteroides (strain BS1), this protein is Aspartate--tRNA(Asp/Asn) ligase.